The following is a 231-amino-acid chain: ATP phosphoribosyltransferase (231 aa).

It belongs to the ATP phosphoribosyltransferase family. Short subfamily. As to quaternary structure, heteromultimer composed of HisG and HisZ subunits.

Its subcellular location is the cytoplasm. The catalysed reaction is 1-(5-phospho-beta-D-ribosyl)-ATP + diphosphate = 5-phospho-alpha-D-ribose 1-diphosphate + ATP. The protein operates within amino-acid biosynthesis; L-histidine biosynthesis; L-histidine from 5-phospho-alpha-D-ribose 1-diphosphate: step 1/9. Its function is as follows. Catalyzes the condensation of ATP and 5-phosphoribose 1-diphosphate to form N'-(5'-phosphoribosyl)-ATP (PR-ATP). Has a crucial role in the pathway because the rate of histidine biosynthesis seems to be controlled primarily by regulation of HisG enzymatic activity. In Brucella suis biovar 1 (strain 1330), this protein is ATP phosphoribosyltransferase.